We begin with the raw amino-acid sequence, 194 residues long: Imidazoleglycerol-phosphate dehydratase (194 aa).

It belongs to the imidazoleglycerol-phosphate dehydratase family.

It localises to the cytoplasm. It catalyses the reaction D-erythro-1-(imidazol-4-yl)glycerol 3-phosphate = 3-(imidazol-4-yl)-2-oxopropyl phosphate + H2O. The protein operates within amino-acid biosynthesis; L-histidine biosynthesis; L-histidine from 5-phospho-alpha-D-ribose 1-diphosphate: step 6/9. The polypeptide is Imidazoleglycerol-phosphate dehydratase (Bacillus thuringiensis (strain Al Hakam)).